A 396-amino-acid chain; its full sequence is Large ribosomal subunit protein uL24m (396 aa).

A disordered region spans residues 374–396; that stretch reads QLSLGGGQEDAATTTSPEQPKVV. The segment covering 384–396 has biased composition (polar residues); it reads AATTTSPEQPKVV.

Belongs to the universal ribosomal protein uL24 family. As to quaternary structure, component of the mitochondrial large ribosomal subunit (mt-LSU). Mature N.crassa 74S mitochondrial ribosomes consist of a small (37S) and a large (54S) subunit. The 37S small subunit contains a 16S ribosomal RNA (16S mt-rRNA) and 32 different proteins. The 54S large subunit contains a 23S rRNA (23S mt-rRNA) and 42 different proteins. uL24m forms the wall of the exit tunnel.

It is found in the mitochondrion. Its function is as follows. Component of the mitochondrial ribosome (mitoribosome), a dedicated translation machinery responsible for the synthesis of mitochondrial genome-encoded proteins, including at least some of the essential transmembrane subunits of the mitochondrial respiratory chain. The mitoribosomes are attached to the mitochondrial inner membrane and translation products are cotranslationally integrated into the membrane. This Neurospora crassa (strain ATCC 24698 / 74-OR23-1A / CBS 708.71 / DSM 1257 / FGSC 987) protein is Large ribosomal subunit protein uL24m (mrpl40).